We begin with the raw amino-acid sequence, 463 residues long: Phosphoglucosamine mutase (463 aa).

Catalysis depends on S110, which acts as the Phosphoserine intermediate. Residues S110, D255, D257, and D259 each contribute to the Mg(2+) site. Residue S110 is modified to Phosphoserine.

The protein belongs to the phosphohexose mutase family. Requires Mg(2+) as cofactor. In terms of processing, activated by phosphorylation.

The enzyme catalyses alpha-D-glucosamine 1-phosphate = D-glucosamine 6-phosphate. Functionally, catalyzes the conversion of glucosamine-6-phosphate to glucosamine-1-phosphate. The chain is Phosphoglucosamine mutase from Koribacter versatilis (strain Ellin345).